We begin with the raw amino-acid sequence, 339 residues long: Transmembrane protein 120B (339 aa).

Residues 1–67 adopt a coiled-coil conformation; that stretch reads MSGQLERCER…KHTLQRYKRH (67 aa). The next 6 membrane-spanning stretches (helical) occupy residues 102 to 124, 132 to 152, 159 to 179, 187 to 207, 270 to 290, and 302 to 322; these read GLYL…AKFA, FKLY…FVLH, VFNF…SILI, GWWV…LTWP, FLLP…VTLF, and QVFV…LTTL.

Belongs to the TMEM120 family. As to quaternary structure, heterooligomer with TMEM120A. Expressed in inguinal and subcutaneous white adipose tissue and in brown adipose tissue.

It localises to the nucleus inner membrane. Its function is as follows. Necessary for efficient adipogenesis. Does not show ion channel activity. This chain is Transmembrane protein 120B, found in Mus musculus (Mouse).